A 1401-amino-acid chain; its full sequence is Lysine-specific demethylase 6A (1401 aa).

An interaction with SUPT6H region spans residues methionine 1–lysine 1095. 8 TPR repeats span residues serine 95–tyrosine 128, alanine 132–phenylalanine 165, lysine 169–threonine 203, alanine 207–serine 240, alanine 245–serine 285, glycine 286–serine 319, aspartate 321–histidine 353, and alanine 355–serine 387. Polar residues predominate over residues alanine 439 to glycine 453. The disordered stretch occupies residues alanine 439 to glutamine 463. Omega-N-methylarginine is present on residues arginine 519 and arginine 549. Polar residues-rich tracts occupy residues asparagine 596–asparagine 606, histidine 619–glycine 642, and leucine 660–serine 743. Positions asparagine 596 to glutamate 745 are disordered. A Phosphoserine modification is found at serine 769. Disordered stretches follow at residues glycine 795–glutamine 863, leucine 914–proline 941, and phenylalanine 1043–lysine 1080. Low complexity predominate over residues serine 814–threonine 833. A Phosphothreonine modification is found at threonine 827. Serine 829 carries the phosphoserine modification. Positions glutamate 834 to histidine 848 are enriched in polar residues. The span at cysteine 918–leucine 931 shows a compositional bias: pro residues. The segment covering serine 1046–serine 1063 has biased composition (basic and acidic residues). The 164-residue stretch at lysine 1095–tryptophan 1258 folds into the JmjC domain. Positions 1146, 1148, and 1226 each coordinate Fe cation. Zn(2+) contacts are provided by cysteine 1331, cysteine 1334, cysteine 1358, and cysteine 1361.

This sequence belongs to the UTX family. Component of the MLL2/3 complex (also named ASCOM complex), at least composed of KMT2D/MLL2 or KMT2C/MLL3, ASH2L, RBBP5, WDR5, NCOA6, DPY30, KDM6A (or KDM6B), PAXIP1/PTIP, PAGR1 and alpha- and beta-tubulin. Interacts with TLE1. Interacts with SUPT6H. Interacts with SMARCA4. Interacts with PROSER1. L-ascorbate serves as cofactor. It depends on Fe(2+) as a cofactor. In terms of tissue distribution, expressed in brain, heart and spleen.

Its subcellular location is the nucleus. The enzyme catalyses N(6),N(6),N(6)-trimethyl-L-lysyl(27)-[histone H3] + 2 2-oxoglutarate + 2 O2 = N(6)-methyl-L-lysyl(27)-[histone H3] + 2 formaldehyde + 2 succinate + 2 CO2. Histone demethylase that specifically demethylates 'Lys-27' of histone H3, thereby playing a central role in histone code. Demethylates trimethylated and dimethylated but not monomethylated H3 'Lys-27'. Plays a central role in regulation of posterior development, by regulating HOX gene expression. Demethylation of 'Lys-27' of histone H3 is concomitant with methylation of 'Lys-4' of histone H3, and regulates the recruitment of the PRC1 complex and monoubiquitination of histone H2A. Plays a demethylase-independent role in chromatin remodeling to regulate T-box family member-dependent gene expression. This is Lysine-specific demethylase 6A (Kdm6a) from Mus musculus (Mouse).